A 258-amino-acid chain; its full sequence is tRNA pseudouridine synthase A (258 aa).

Aspartate 52 acts as the Nucleophile in catalysis. Position 110 (tyrosine 110) interacts with substrate.

The protein belongs to the tRNA pseudouridine synthase TruA family. As to quaternary structure, homodimer.

The enzyme catalyses uridine(38/39/40) in tRNA = pseudouridine(38/39/40) in tRNA. Functionally, formation of pseudouridine at positions 38, 39 and 40 in the anticodon stem and loop of transfer RNAs. This is tRNA pseudouridine synthase A from Francisella tularensis subsp. holarctica (strain LVS).